The sequence spans 245 residues: tRNA1(Val) (adenine(37)-N6)-methyltransferase (245 aa).

The protein belongs to the methyltransferase superfamily. tRNA (adenine-N(6)-)-methyltransferase family.

The protein localises to the cytoplasm. It catalyses the reaction adenosine(37) in tRNA1(Val) + S-adenosyl-L-methionine = N(6)-methyladenosine(37) in tRNA1(Val) + S-adenosyl-L-homocysteine + H(+). In terms of biological role, specifically methylates the adenine in position 37 of tRNA(1)(Val) (anticodon cmo5UAC). The polypeptide is tRNA1(Val) (adenine(37)-N6)-methyltransferase (Escherichia coli O157:H7).